The primary structure comprises 181 residues: Mannose-specific lectin (181 aa).

Positions M1–A30 are cleaved as a signal peptide. Positions R31–R140 constitute a Bulb-type lectin domain. Q56, D58, N60, Y64, W71, A72, N74, Q88, D90, N92, Y96, V103, W104, N107, N114, Q120, D122, N124, Y128, and W133 together coordinate alpha-D-mannopyranose. A disulfide bridge links C59 with C83.

As to quaternary structure, homodimer.

The protein resides in the secreted. Mannose-specific lectin. Shows agglutinating activity towards rabbit erythrocytes. However, it does not show agglutinating activity towards human erythrocytes. Has insecticidal activity against the cotton leafworm S.littoralis and the peach potato aphid M.persicae. Also displays antiviral activity and therefore may contribute to defense against infections. This Allium sativum (Garlic) protein is Mannose-specific lectin.